Reading from the N-terminus, the 101-residue chain is Small ribosomal subunit protein uS14 (101 aa).

The protein belongs to the universal ribosomal protein uS14 family. In terms of assembly, part of the 30S ribosomal subunit. Contacts proteins S3 and S10.

Binds 16S rRNA, required for the assembly of 30S particles and may also be responsible for determining the conformation of the 16S rRNA at the A site. In Dechloromonas aromatica (strain RCB), this protein is Small ribosomal subunit protein uS14.